The primary structure comprises 42 residues: Iota-conotoxin-like R11.1 (42 aa).

4 cysteine pairs are disulfide-bonded: Cys-5–Cys-19, Cys-12–Cys-22, Cys-18–Cys-27, and Cys-21–Cys-36.

This sequence belongs to the conotoxin I1 superfamily. Expressed by the venom duct.

The protein resides in the secreted. In terms of biological role, iota-conotoxins bind to voltage-gated sodium channels (Nav) and act as agonists by shifting the voltage-dependence of activation to more hyperpolarized levels. Produces general excitatory symptoms. This is Iota-conotoxin-like R11.1 from Conus radiatus (Rayed cone).